Consider the following 311-residue polypeptide: Cytosolic Fe-S cluster assembly factor Nubp1 homolog (311 aa).

The [4Fe-4S] cluster site is built by Cys-9, Cys-23, Cys-26, and Cys-32. 63 to 70 contributes to the ATP binding site; it reads GKGGVGKS. Residues Cys-241 and Cys-244 each coordinate [4Fe-4S] cluster.

It belongs to the Mrp/NBP35 ATP-binding proteins family. NUBP1/NBP35 subfamily. Heterotetramer of 2 Nubp1 and 2 Nubp2 chains. The cofactor is [4Fe-4S] cluster.

It localises to the cytoplasm. Component of the cytosolic iron-sulfur (Fe/S) protein assembly (CIA) machinery. Required for maturation of extramitochondrial Fe-S proteins. The Nubp1-Nubp2 heterotetramer forms a Fe-S scaffold complex, mediating the de novo assembly of an Fe-S cluster and its transfer to target apoproteins. This is Cytosolic Fe-S cluster assembly factor Nubp1 homolog from Drosophila grimshawi (Hawaiian fruit fly).